The following is a 247-amino-acid chain: uncharacterized protein (247 aa).

Positions 102-247 (RSIMSRTNDN…ISEHHYRIKR (146 aa)) constitute an N-acetyltransferase domain.

The protein belongs to the acetyltransferase family.

This is an uncharacterized protein from Bacillus subtilis (strain 168).